A 213-amino-acid chain; its full sequence is Probable RNA 2'-phosphotransferase (213 aa).

Belongs to the KptA/TPT1 family.

Its function is as follows. Removes the 2'-phosphate from RNA via an intermediate in which the phosphate is ADP-ribosylated by NAD followed by a presumed transesterification to release the RNA and generate ADP-ribose 1''-2''-cyclic phosphate (APPR&gt;P). May function as an ADP-ribosylase. The polypeptide is Probable RNA 2'-phosphotransferase (Pyrobaculum aerophilum (strain ATCC 51768 / DSM 7523 / JCM 9630 / CIP 104966 / NBRC 100827 / IM2)).